The sequence spans 445 residues: Argininosuccinate lyase (445 aa).

Belongs to the lyase 1 family. Argininosuccinate lyase subfamily.

The protein resides in the cytoplasm. The enzyme catalyses 2-(N(omega)-L-arginino)succinate = fumarate + L-arginine. Its pathway is amino-acid biosynthesis; L-arginine biosynthesis; L-arginine from L-ornithine and carbamoyl phosphate: step 3/3. The sequence is that of Argininosuccinate lyase from Xylella fastidiosa (strain Temecula1 / ATCC 700964).